Here is a 239-residue protein sequence, read N- to C-terminus: Ribonuclease HII (239 aa).

Residues 30–221 (GPVAGVDEVG…VRRVANGSGG (192 aa)) form the RNase H type-2 domain. 3 residues coordinate a divalent metal cation: aspartate 36, glutamate 37, and aspartate 130.

This sequence belongs to the RNase HII family. Requires Mn(2+) as cofactor. Mg(2+) is required as a cofactor.

It is found in the cytoplasm. It catalyses the reaction Endonucleolytic cleavage to 5'-phosphomonoester.. Endonuclease that specifically degrades the RNA of RNA-DNA hybrids. In Mycolicibacterium paratuberculosis (strain ATCC BAA-968 / K-10) (Mycobacterium paratuberculosis), this protein is Ribonuclease HII.